The primary structure comprises 458 residues: Dihydrolipoyllysine-residue acetyltransferase component of pyruvate dehydrogenase complex, mitochondrial (458 aa).

A mitochondrion-targeting transit peptide spans 1 to 28 (MIVPVLSRQALRHASVARVALPSLTRWY). One can recognise a Lipoyl-binding domain in the interval 34–110 (HTVVKMPALS…AVGNPIAILV (77 aa)). The residue at position 75 (Lys75) is an N6-lipoyllysine. A disordered region spans residues 126 to 164 (DAGGETSPAVPKDEPKNESTASAPTPAPTPAPEPENTSF). The 38-residue stretch at 177–214 (NALPAAKRLAREKGIDLRNVKGSGPGGKITEEDVKKAL) folds into the Peripheral subunit-binding (PSBD) domain. Active-site residues include His431 and Asp435.

This sequence belongs to the 2-oxoacid dehydrogenase family. It depends on (R)-lipoate as a cofactor.

It localises to the mitochondrion matrix. The catalysed reaction is N(6)-[(R)-dihydrolipoyl]-L-lysyl-[protein] + acetyl-CoA = N(6)-[(R)-S(8)-acetyldihydrolipoyl]-L-lysyl-[protein] + CoA. Its function is as follows. The pyruvate dehydrogenase complex catalyzes the overall conversion of pyruvate to acetyl-CoA and CO(2). It contains multiple copies of three enzymatic components: pyruvate dehydrogenase (E1), dihydrolipoamide acetyltransferase (E2) and lipoamide dehydrogenase (E3). This chain is Dihydrolipoyllysine-residue acetyltransferase component of pyruvate dehydrogenase complex, mitochondrial (mrp-3), found in Neurospora crassa (strain ATCC 24698 / 74-OR23-1A / CBS 708.71 / DSM 1257 / FGSC 987).